The sequence spans 560 residues: Nitrite reductase (560 aa).

Positions 1–26 (MSNVGKPILAGLIAGLSLLGLAVAQA) are cleaved as a signal peptide. An N-terminal tail region spans residues 27–29 (AAP). In terms of domain architecture, Cytochrome c spans 30–126 (EMTAEEKEAS…ARYIQHTPDI (97 aa)). The heme c site is built by cysteine 47, cysteine 50, and histidine 51. Residues 61–80 (KNLEPHWSKTEADGKKTEGG) form a disordered region. Positions 63–78 (LEPHWSKTEADGKKTE) are enriched in basic and acidic residues. The heme c site is built by threonine 97 and methionine 101. The segment at 127-560 (PPEFSLQDMK…NVFNTMNDVY (434 aa)) is D1-heme domain. Histidine 193, arginine 236, serine 237, tyrosine 256, arginine 382, and glutamine 500 together coordinate heme d1.

Homodimer in solution. Heme c serves as cofactor. The cofactor is heme.

Its subcellular location is the periplasm. It catalyses the reaction nitric oxide + Fe(III)-[cytochrome c] + H2O = Fe(II)-[cytochrome c] + nitrite + 2 H(+). The enzyme catalyses A + NH4(+) + H2O = hydroxylamine + AH2 + H(+). This Stutzerimonas stutzeri (Pseudomonas stutzeri) protein is Nitrite reductase (nirS).